The following is a 283-amino-acid chain: NAD kinase (283 aa).

Aspartate 66 acts as the Proton acceptor in catalysis. NAD(+) is bound by residues 66–67 (DG), 134–135 (ND), arginine 145, arginine 163, aspartate 165, and 176–181 (TAYSMS).

The protein belongs to the NAD kinase family. A divalent metal cation serves as cofactor.

The protein resides in the cytoplasm. It carries out the reaction NAD(+) + ATP = ADP + NADP(+) + H(+). Involved in the regulation of the intracellular balance of NAD and NADP, and is a key enzyme in the biosynthesis of NADP. Catalyzes specifically the phosphorylation on 2'-hydroxyl of the adenosine moiety of NAD to yield NADP. In Chlorobaculum tepidum (strain ATCC 49652 / DSM 12025 / NBRC 103806 / TLS) (Chlorobium tepidum), this protein is NAD kinase.